Consider the following 279-residue polypeptide: MLIIELLKALFLGVVEGVTEWLPVSSTGHLILVQEFMKLNQSKSFVEMFNIVIQLGAIMAVIVIYFKRLNPFQPGKSAREIRLTWQLWLKVVIACIPSILIALPFDNWFEAHFNFMIPIAIALIFYGFVFIWVEKRNAHLKPQVTELASMSYKTAFLIGCFQVLSIVPGTSRSGATILGAIIIGTSRSVAADFTFFLAIPTMFGYSGLKAVKYFLDGNVLSLDQSLILLVASLIAFVVSLYVIRFLTDYVKRHDFTIFGKYRIVLGSLLILYWLVVHLF.

Transmembrane regions (helical) follow at residues 45–65 (FVEM…IVIY), 85–105 (WQLW…ALPF), 113–133 (FNFM…FIWV), 188–208 (SVAA…YSGL), 226–246 (LILL…IRFL), and 255–275 (FTIF…YWLV).

This sequence belongs to the UppP family.

Its subcellular location is the cell membrane. The catalysed reaction is di-trans,octa-cis-undecaprenyl diphosphate + H2O = di-trans,octa-cis-undecaprenyl phosphate + phosphate + H(+). Its function is as follows. Catalyzes the dephosphorylation of undecaprenyl diphosphate (UPP). Confers resistance to bacitracin. This chain is Undecaprenyl-diphosphatase, found in Streptococcus agalactiae serotype Ia (strain ATCC 27591 / A909 / CDC SS700).